The primary structure comprises 400 residues: Selection and upkeep of intraepithelial T-cells protein 2 (400 aa).

A signal peptide spans 1 to 21; that stretch reads MGATGVLLCVVLHFLQMVTQS. Topologically, residues 22–240 are extracellular; sequence SEKFTVTGLQ…LSGELFSWKR (219 aa). In terms of domain architecture, Ig-like V-type spans 23–133; that stretch reads EKFTVTGLQR…VGEFYEEHIT (111 aa). 2 disulfide bridges follow: C46–C120 and C160–C214. The Ig-like C1-type domain occupies 139–225; that stretch reads ATSSVMYILM…LQNLLTHQEE (87 aa). N197 carries N-linked (GlcNAc...) asparagine glycosylation. The helical transmembrane segment at 241-261 threads the bilayer; it reads VWIMILTTIGFMMIAFCMTYC. At 262–280 the chain is on the cytoplasmic side; it reads VQQHLLYGTFSKGKCHWLK. A helical transmembrane segment spans residues 281–301; that stretch reads STMIFMFSVIAVTGVMLILHL. Residues 302–321 are Extracellular-facing; that stretch reads KQRVPVSDQHFELDTLWLED. Residues 322-342 traverse the membrane as a helical segment; it reads ISVILCVLIVFIIKLISFIYF. At 343–400 the chain is on the cytoplasmic side; it reads RLEGDHQGWSLPPYLSATPTAAICRLAVPEYSRGHLQLDSEDDLAGMGPSPFFITPCF.

Belongs to the SKINT family. In terms of tissue distribution, expressed in skin, thymus and mammary gland.

Its subcellular location is the membrane. May act by engaging a cell surface molecule on immature T-cells in the embryonic thymus. This is Selection and upkeep of intraepithelial T-cells protein 2 (Skint2) from Mus musculus (Mouse).